A 225-amino-acid polypeptide reads, in one-letter code: PKHD-type hydroxylase YbiX (225 aa).

Residues 78 to 177 (TLSTPLFNRY…RVASFMWIQS (100 aa)) enclose the Fe2OG dioxygenase domain. Fe cation contacts are provided by histidine 96, aspartate 98, and histidine 158. Arginine 168 is a binding site for 2-oxoglutarate.

Requires Fe(2+) as cofactor. The cofactor is L-ascorbate.

This Escherichia coli (strain 55989 / EAEC) protein is PKHD-type hydroxylase YbiX.